The chain runs to 378 residues: MLAPFACQPGESRGRQKPESMSTFRSPFQRDRDRIIHSSAFRRLKHKTQVFVEHEGDYYRTRLTHSIEVAQVARTISGVLGLNTDLAECIALAHDLGHTPFGHTGEDALARLMEPYGGFDHNAQAMRIVTRLERHYAEFDGLNLTWESLEGIAKHNGPVEGPLPYALAEANAQWDLELHTYASAEAQVAAIADDVAYSHHDLHDGLRSGLFTEADLMELPVTAPAFDEVDALYPGLEPMRRRHEALRRVFGRMVEDVIAVAQGRLEAAQPKSVEEIRQMGATVIRFSKPLYQELKVIRSFLFHRMYRAPSVMKERAKVTAVVNDLFPLFMARPELLPQEWRRDVEAAADETTLARIVADYVAGMTDRFALQEHARLCG.

The tract at residues 1–28 is disordered; that stretch reads MLAPFACQPGESRGRQKPESMSTFRSPF. The 137-residue stretch at 62-198 folds into the HD domain; it reads RLTHSIEVAQ…AAIADDVAYS (137 aa).

Belongs to the dGTPase family. Type 2 subfamily.

This Cereibacter sphaeroides (strain ATCC 17029 / ATH 2.4.9) (Rhodobacter sphaeroides) protein is Deoxyguanosinetriphosphate triphosphohydrolase-like protein.